Reading from the N-terminus, the 242-residue chain is Segregation and condensation protein A (242 aa).

It belongs to the ScpA family. Component of a cohesin-like complex composed of ScpA, ScpB and the Smc homodimer, in which ScpA and ScpB bind to the head domain of Smc. The presence of the three proteins is required for the association of the complex with DNA.

It is found in the cytoplasm. Its function is as follows. Participates in chromosomal partition during cell division. May act via the formation of a condensin-like complex containing Smc and ScpB that pull DNA away from mid-cell into both cell halves. The chain is Segregation and condensation protein A from Lactococcus lactis subsp. cremoris (strain SK11).